Consider the following 121-residue polypeptide: MDLIRKIEAQNKKSEAFVFNVGDTVRVIYKIIEGSNERLQSFEGIIISFQNKGIGKTFLVRKISSGIGVEKIFPVYSPIIEKVEVLRRGKVRRAKLYYMRNRIGKAAMKIKERLNIKKVKH.

This sequence belongs to the bacterial ribosomal protein bL19 family.

Its function is as follows. This protein is located at the 30S-50S ribosomal subunit interface and may play a role in the structure and function of the aminoacyl-tRNA binding site. This chain is Large ribosomal subunit protein bL19, found in Borrelia garinii subsp. bavariensis (strain ATCC BAA-2496 / DSM 23469 / PBi) (Borreliella bavariensis).